A 646-amino-acid polypeptide reads, in one-letter code: Elongation factor 4 (646 aa).

Positions 42–227 (AQIRNFCIIA…EVVRRVPHPQ (186 aa)) constitute a tr-type G domain. Residues 54-59 (DHGKST) and 174-177 (NKID) each bind GTP.

Belongs to the TRAFAC class translation factor GTPase superfamily. Classic translation factor GTPase family. LepA subfamily.

It is found in the cell membrane. The catalysed reaction is GTP + H2O = GDP + phosphate + H(+). Its function is as follows. Required for accurate and efficient protein synthesis under certain stress conditions. May act as a fidelity factor of the translation reaction, by catalyzing a one-codon backward translocation of tRNAs on improperly translocated ribosomes. Back-translocation proceeds from a post-translocation (POST) complex to a pre-translocation (PRE) complex, thus giving elongation factor G a second chance to translocate the tRNAs correctly. Binds to ribosomes in a GTP-dependent manner. This Mycobacterium leprae (strain Br4923) protein is Elongation factor 4.